Reading from the N-terminus, the 308-residue chain is Glutaminase (308 aa).

Substrate-binding residues include Ser66, Asn117, Glu161, Asn168, Tyr192, Tyr244, and Val262.

Belongs to the glutaminase family. In terms of assembly, homotetramer.

It carries out the reaction L-glutamine + H2O = L-glutamate + NH4(+). This chain is Glutaminase, found in Salmonella arizonae (strain ATCC BAA-731 / CDC346-86 / RSK2980).